A 236-amino-acid polypeptide reads, in one-letter code: Adenylate dimethylallyltransferase (236 aa).

Belongs to the isopentenyl transferase family.

It carries out the reaction dimethylallyl diphosphate + AMP = N(6)-(dimethylallyl)adenosine 5'-phosphate + diphosphate. Its function is as follows. Transfers dimethylallyl groups to AMP as part of the biosynthesis of cytokinin phytohormones. The sequence is that of Adenylate dimethylallyltransferase (ipt) from Allorhizobium ampelinum (strain ATCC BAA-846 / DSM 112012 / S4) (Agrobacterium vitis (strain S4)).